The chain runs to 612 residues: MCGIVGIVSQRNILKFLLTGLNHLEYRGYDSSGLAVIDNNNKLRCIKKVGKVNVLEKAILNKKMSFLGKTGVAHTRWATHGPPTENNAHPHISGNIAVVHNGIIENHEHLRSKLKSYKYKFNSDTDTEVIAHLIHWEQNKNGGSLTEVVKRVSRMLFGIYSTVVMDSNNPNILIAECFGSPLIIGLGICENSIASDQLALLNLSKNFIFLKNGDIAEITNSKIRIWDKFNNKINRDTVQTKISLDINKKGNFKHFLKKEIFEQPKAIKNTLKNRIKKNYIYLSELSGKFNKTIKYIKHIKLVACGSSYNSAMVSKYWFEKFAGLSCNIEIASEFCYRKIVICKNSLLIFLSQSGETADILSALRLIKKFNYVFSISICNTPESSLIRESEISILTHAGVEISVASTKTFTTQLTALLMLISHICYIRKINEKSQTDIFNAIQILPNRIEQMLLVKNSVKKLVKNFSNKKNVIIIGRGELYPIAIEAALKLKETSYIHAEGYAAGELKHGTLALIDTNTPVIVLVCKNKLLRKTLSNIEEIKSRGGQIYIFSEKSIFFSKSSNVNITKLPFVEELLVPMAYIVPMQLLSYYIGIEKNVDVDHPRNLAKTVTVE.

C2 serves as the catalytic Nucleophile; for GATase activity. The Glutamine amidotransferase type-2 domain maps to 2–221 (CGIVGIVSQR…NGDIAEITNS (220 aa)). 2 SIS domains span residues 289-429 (FNKT…IRKI) and 461-602 (LVKN…VDHP). Catalysis depends on K607, which acts as the For Fru-6P isomerization activity.

Homodimer.

Its subcellular location is the cytoplasm. The catalysed reaction is D-fructose 6-phosphate + L-glutamine = D-glucosamine 6-phosphate + L-glutamate. Its function is as follows. Catalyzes the first step in hexosamine metabolism, converting fructose-6P into glucosamine-6P using glutamine as a nitrogen source. The polypeptide is Glutamine--fructose-6-phosphate aminotransferase [isomerizing] (Wigglesworthia glossinidia brevipalpis).